We begin with the raw amino-acid sequence, 155 residues long: Ribosome maturation factor RimP (155 aa).

Belongs to the RimP family.

It is found in the cytoplasm. Its function is as follows. Required for maturation of 30S ribosomal subunits. The protein is Ribosome maturation factor RimP of Parasynechococcus marenigrum (strain WH8102).